The sequence spans 410 residues: MMTRRKKRSCSNQKKEEEKSERIPFDLVIEILLRLPVKSIARFRYVSKLWQSTLRGQHFTESYLTISSSRPKILFTCLKDCETFFFSSPHPQDLSPIAANLHMSFPISCPSNICRPVRGWLCGLHQRTTKGTTVTEPLICNPSTGESVVLRKVKTRRKGVISFLGFDPIDKNFKVLCMTRSCIGRADSEEHQVHTLETGKKPSRKMIECDILHYPVPVEHTNGFSQYDGVCINGVLYYLAIVHGVSDDRYPDVVCFEFGSDKFKYIKKVAGHDMEILYLGRRLNSILVNYKGKLAKLQPNMPNNVCTGIQLWVLEDAEKHEWSSHIYVLPPPWRNVYEETKLCFVGTTRKGEIVLSPNTISDFFYLLYYNPDRNTITIVKIKGMETFQSHKAYTFLDHLEDVNLVPIWRM.

The F-box domain occupies 17 to 66; the sequence is EEKSERIPFDLVIEILLRLPVKSIARFRYVSKLWQSTLRGQHFTESYLTI.

This is F-box protein At3g61340 from Arabidopsis thaliana (Mouse-ear cress).